A 542-amino-acid polypeptide reads, in one-letter code: MTTDLQAELETEVERRRNFAIISHPDAGKTTLTEKLLLYGGAIHEAGAVKARRAQRHATSDWMEMEQQRGISITSTVLQFEYQGYQINLLDTPGHQDFSEDTYRTLAAADNAVMLVDAAKGLEPQTRKLFEVCKLRSLPIFTFINKLDRPGREPLDLLDEIEKELGLQTYAVNWPIGMGDRFKGVYDRRLQQIHLFERTAHGKREARDTIVDLGDPQIEALLDQDLYFQLKDDLELIEGLGPELDLEAVHQGKMTPIFFGSAMTNFGVELFLNAFLDYALKPATYRSSQGAIAPTHEDFSGFVFKLQANMDPKHRDRVAFVRVCAGKFEKDMTVNHARTGKMIRLSRPQKLFAQGRESLETAYAGDVIGLNNPGVFAIGDTIYSGQKLEYEGIPCFSPELFAYLRNPNPSKFKQFQKGVSELREEGAVQIMYSVDESKREPILAAVGQLQFEVVQFRLQNEYGVETRIELLPYTVARWVVEGWPALEAVGRIFNAVTVKDSWGRPVLLFKNEWNAQQVLADHPKLKLSGIAPVVSGQQPEAL.

Residues 14–283 form the tr-type G domain; that stretch reads ERRRNFAIIS…AFLDYALKPA (270 aa). GTP is bound by residues 23-30, 91-95, and 145-148; these read SHPDAGKT, DTPGH, and NKLD.

Belongs to the TRAFAC class translation factor GTPase superfamily. Classic translation factor GTPase family. PrfC subfamily.

The protein resides in the cytoplasm. Functionally, increases the formation of ribosomal termination complexes and stimulates activities of RF-1 and RF-2. It binds guanine nucleotides and has strong preference for UGA stop codons. It may interact directly with the ribosome. The stimulation of RF-1 and RF-2 is significantly reduced by GTP and GDP, but not by GMP. The sequence is that of Peptide chain release factor 3 from Cyanothece sp. (strain PCC 7425 / ATCC 29141).